Here is a 128-residue protein sequence, read N- to C-terminus: Large ribosomal subunit protein bL12 (128 aa).

This sequence belongs to the bacterial ribosomal protein bL12 family. Homodimer. Part of the ribosomal stalk of the 50S ribosomal subunit. Forms a multimeric L10(L12)X complex, where L10 forms an elongated spine to which 2 to 4 L12 dimers bind in a sequential fashion. Binds GTP-bound translation factors.

Forms part of the ribosomal stalk which helps the ribosome interact with GTP-bound translation factors. Is thus essential for accurate translation. This Synechococcus sp. (strain CC9902) protein is Large ribosomal subunit protein bL12.